Reading from the N-terminus, the 111-residue chain is Small ribosomal subunit protein mS38 (111 aa).

Positions 82–99 are enriched in basic residues; the sequence is RKRKKKMKKHKLRKRRKR. Residues 82–111 form a disordered region; sequence RKRKKKMKKHKLRKRRKREKAERRKLSQGR. Over residues 100-111 the composition is skewed to basic and acidic residues; that stretch reads EKAERRKLSQGR.

The protein belongs to the mitochondrion-specific ribosomal protein mS38 family. Component of the mitochondrial small ribosomal subunit (mt-SSU). Mature yeast 74S mitochondrial ribosomes consist of a small (37S) and a large (54S) subunit. The 37S small subunit contains a 15S ribosomal RNA (15S mt-rRNA) and 34 different proteins. The 54S large subunit contains a 21S rRNA (21S mt-rRNA) and 46 different proteins.

Its subcellular location is the mitochondrion. The protein localises to the mitochondrion inner membrane. In terms of biological role, component of the mitochondrial ribosome (mitoribosome), a dedicated translation machinery responsible for the synthesis of mitochondrial genome-encoded proteins, including at least some of the essential transmembrane subunits of the mitochondrial respiratory chain. The mitoribosomes are attached to the mitochondrial inner membrane and translation products are cotranslationally integrated into the membrane. mS38 is also involved in the splicing of the COX1 mRNA. This Saccharomyces cerevisiae (strain ATCC 204508 / S288c) (Baker's yeast) protein is Small ribosomal subunit protein mS38 (QRI5).